The following is a 615-amino-acid chain: 9-cis-epoxycarotenoid dioxygenase NCED1, chloroplastic (615 aa).

A chloroplast-targeting transit peptide spans 1–41 (MPSPASNTWINTTLPSSCSSPFKDLASTSSSPTTLLPFKKR). Disordered stretches follow at residues 20–45 (SPFK…SSSN) and 62–101 (YQPT…KQPF). 2 stretches are compositionally biased toward low complexity: residues 27 to 37 (STSSSPTTLLP) and 64 to 86 (PTST…TTTT). Residues His316, His365, and His430 each coordinate Fe cation. The stretch at 571–592 (KEWKSELQIVNAQNLKLEASIK) forms a coiled coil. His602 is a Fe cation binding site.

It belongs to the carotenoid oxygenase family. Fe(2+) is required as a cofactor.

Its subcellular location is the plastid. The protein resides in the chloroplast thylakoid membrane. It carries out the reaction a 9-cis-epoxycarotenoid + O2 = a 12'-apo-carotenal + 2-cis,4-trans-xanthoxin. The enzyme catalyses 9-cis-violaxanthin + O2 = (3S,5R,6S)-5,6-epoxy-3-hydroxy-5,6-dihydro-12'-apo-beta-caroten-12'-al + 2-cis,4-trans-xanthoxin. It catalyses the reaction 9'-cis-neoxanthin + O2 = (3S,5R,6R)-3,5-dihydroxy-6,7-didehydro-5,6-dihydro-12'-apo-beta-caroten-12'-al + 2-cis,4-trans-xanthoxin. Has a 11,12(11',12') 9-cis epoxycarotenoid cleavage activity. Catalyzes the first step of abscisic-acid biosynthesis from carotenoids, in response to water stress. Active on 9-cis-violaxanthin and 9'-cis-neoxanthin, but not on the all-trans isomers of violaxanthin and neoxanthin. The polypeptide is 9-cis-epoxycarotenoid dioxygenase NCED1, chloroplastic (NCED1) (Phaseolus vulgaris (Kidney bean)).